The chain runs to 127 residues: Fluoride-specific ion channel FluC (127 aa).

4 consecutive transmembrane segments (helical) span residues 4–24, 35–55, 71–91, and 99–119; these read FTLL…RYLI, GFPY…GILM, IIGL…MDNV, and FIKA…ACFI. Residues G78 and T81 each coordinate Na(+).

This sequence belongs to the fluoride channel Fluc/FEX (TC 1.A.43) family.

The protein resides in the cell inner membrane. The catalysed reaction is fluoride(in) = fluoride(out). Its activity is regulated as follows. Na(+) is not transported, but it plays an essential structural role and its presence is essential for fluoride channel function. Functionally, fluoride-specific ion channel. Important for reducing fluoride concentration in the cell, thus reducing its toxicity. The chain is Fluoride-specific ion channel FluC from Photobacterium profundum (strain SS9).